Here is a 530-residue protein sequence, read N- to C-terminus: Vesicular acetylcholine transporter (530 aa).

Residues 1 to 33 (MEPTAPTGQARAAATKLSEAVGAALQEPQRQRR) lie on the Cytoplasmic side of the membrane. The helical transmembrane segment at 34 to 54 (LVLVIVCVALLLDNMLYMVIV) threads the bilayer. Over 55-125 (PIVPDYIAHM…PTESEDVKIG (71 aa)) the chain is Lumenal, vesicle. N-linked (GlcNAc...) asparagine glycosylation is found at Asn89 and Asn96. The chain crosses the membrane as a helical span at residues 126–146 (VLFASKAILQLLVNPLSGPFI). Residues 147–152 (DRMSYD) lie on the Cytoplasmic side of the membrane. Residues 153–173 (VPLLIGLGVMFASTVMFAFAE) traverse the membrane as a helical segment. At 174-182 (DYATFFAAR) the chain is on the lumenal, vesicle side. A helical transmembrane segment spans residues 183 to 203 (SLQGLGSAFADTSGIAMIADK). Residues 204–213 (YPEEPERSRA) lie on the Cytoplasmic side of the membrane. The chain crosses the membrane as a helical span at residues 214–234 (LGVALAFISFGSLVAPPFGGI). The Lumenal, vesicle portion of the chain corresponds to 235–242 (LYEFAGKR). A helical transmembrane segment spans residues 243–263 (VPFLVLAAVSLFDALLLLAVA). The Cytoplasmic portion of the chain corresponds to 264-288 (KPFSAAARARANLPVGTPIHRLMLD). Residues 289 to 309 (PYIAVVAGALTTCNIPLAFLE) form a helical membrane-spanning segment. Residues 310 to 325 (PTIATWMKHTMAASEW) lie on the Lumenal, vesicle side of the membrane. A helical transmembrane segment spans residues 326 to 346 (EMGMVWLPAFVPHVLGVYLTV). The Cytoplasmic portion of the chain corresponds to 347–356 (RLAARYPHLQ). A helical transmembrane segment spans residues 357 to 377 (WLYGALGLAVIGVSSCVVPAC). The Lumenal, vesicle portion of the chain corresponds to 378–388 (RSFAPLVVSLC). A helical membrane pass occupies residues 389–409 (GLCFGIALVDTALLPTLAFLV). Topologically, residues 410–422 (DVRHVSVYGSVYA) are cytoplasmic. Residues 423–443 (IADISYSVAYALGPIVAGHIV) form a helical membrane-spanning segment. The Lumenal, vesicle segment spans residues 444–447 (HSLG). Residues 448-468 (FEQLSLGMGLANLLYAPVLLL) form a helical membrane-spanning segment. At 469–530 (LRNVGLLTRS…EDDYNYYSRS (62 aa)) the chain is on the cytoplasmic side. The interval 471–530 (NVGLLTRSRSERDVLLDEPPQGLYDAVRLREVQGKDGGEPCSPPGPFDGCEDDYNYYSRS) is mediates interaction with SEC14L1. The segment at 504 to 530 (GKDGGEPCSPPGPFDGCEDDYNYYSRS) is disordered.

It belongs to the major facilitator superfamily. Vesicular transporter family. Interacts with SEC14L1. Expressed in the spinal cord, brain (excluding the cerebellum), brain stem and cholinergic tissues. Not expressed in peripheral tissues such as liver and kidney.

The protein localises to the cytoplasmic vesicle. The protein resides in the secretory vesicle. It localises to the synaptic vesicle membrane. It catalyses the reaction acetylcholine(out) + 2 H(+)(in) = acetylcholine(in) + 2 H(+)(out). The catalysed reaction is choline(in) + 2 H(+)(out) = choline(out) + 2 H(+)(in). The enzyme catalyses serotonin(in) + 2 H(+)(out) = serotonin(out) + 2 H(+)(in). Electrogenic antiporter that exchanges one cholinergic neurotransmitter, acetylcholine or choline, with two intravesicular protons across the membrane of synaptic vesicles. Uses the electrochemical proton gradient established by the V-type proton-pump ATPase to store neurotransmitters inside the vesicles prior to their release via exocytosis. Determines cholinergic vesicular quantal size at presynaptic nerve terminals in developing neuro-muscular junctions with an impact on motor neuron differentiation and innervation pattern. Part of forebrain cholinergic system, regulates hippocampal synapse transmissions that underlie spatial memory formation. Can transport serotonin. This chain is Vesicular acetylcholine transporter (Slc18a3), found in Mus musculus (Mouse).